Consider the following 489-residue polypeptide: Glutamyl-tRNA(Gln) amidotransferase subunit A (489 aa).

Catalysis depends on charge relay system residues Lys-79 and Ser-158. The active-site Acyl-ester intermediate is the Ser-182.

This sequence belongs to the amidase family. GatA subfamily. Heterotrimer of A, B and C subunits.

It catalyses the reaction L-glutamyl-tRNA(Gln) + L-glutamine + ATP + H2O = L-glutaminyl-tRNA(Gln) + L-glutamate + ADP + phosphate + H(+). Its function is as follows. Allows the formation of correctly charged Gln-tRNA(Gln) through the transamidation of misacylated Glu-tRNA(Gln) in organisms which lack glutaminyl-tRNA synthetase. The reaction takes place in the presence of glutamine and ATP through an activated gamma-phospho-Glu-tRNA(Gln). This Anaplasma marginale (strain Florida) protein is Glutamyl-tRNA(Gln) amidotransferase subunit A.